We begin with the raw amino-acid sequence, 465 residues long: UDP-N-acetylmuramate--L-alanine ligase (465 aa).

ATP is bound at residue 112–118; the sequence is GTHGKTT.

The protein belongs to the MurCDEF family.

The protein localises to the cytoplasm. The enzyme catalyses UDP-N-acetyl-alpha-D-muramate + L-alanine + ATP = UDP-N-acetyl-alpha-D-muramoyl-L-alanine + ADP + phosphate + H(+). Its pathway is cell wall biogenesis; peptidoglycan biosynthesis. Its function is as follows. Cell wall formation. In Burkholderia lata (strain ATCC 17760 / DSM 23089 / LMG 22485 / NCIMB 9086 / R18194 / 383), this protein is UDP-N-acetylmuramate--L-alanine ligase.